A 120-amino-acid chain; its full sequence is UPF0145 protein UNCMA_30400 (120 aa).

Belongs to the UPF0145 family.

This is UPF0145 protein UNCMA_30400 from Methanocella arvoryzae (strain DSM 22066 / NBRC 105507 / MRE50).